The following is a 448-amino-acid chain: Zinc finger CCCH domain-containing protein 43 (448 aa).

Residues 1 to 106 (MVNSEEIADG…GWSENESENV (106 aa)) are disordered. Over residues 24–45 (SSHDRSLSDLNHAAEDLSDKLK) the composition is skewed to basic and acidic residues. A compositionally biased stretch (polar residues) spans 63-79 (VSESNGGLDSNAVVTIN). The segment covering 80 to 89 (QEEEEEEEDR) has biased composition (acidic residues). 5 consecutive C3H1-type zinc fingers follow at residues 110-138 (RPGA…HPLA), 158-186 (KLGL…HTIP), 204-232 (RPGE…HPDP), 346-374 (RPDQ…HPKN), and 392-420 (RPDQ…HSVQ). The segment at 424 to 448 (STESSQAIVEPPQVSANGNESDGWN) is disordered. Over residues 437 to 448 (VSANGNESDGWN) the composition is skewed to polar residues.

The protein resides in the nucleus. The sequence is that of Zinc finger CCCH domain-containing protein 43 from Arabidopsis thaliana (Mouse-ear cress).